We begin with the raw amino-acid sequence, 902 residues long: Nuclear factor of activated T-cells, cytoplasmic 4 (902 aa).

Disordered regions lie at residues 16–180 and 208–369; these read VFGE…SSWS and RFGL…GGSR. The segment covering 50 to 81 has biased composition (pro residues); that stretch reads EPPPYGAAPIGIPRPPPPRPGMHSPPPRPAPS. Residues 96–109 are compositionally biased toward gly residues; it reads GGPGGGAGGAGGGR. Residues 114-119 form a calcineurin-binding region; sequence PSIRIT. Residues 151–165 are compositionally biased toward gly residues; it reads GFGGYREAGGQGGGA. The segment covering 166-180 has biased composition (low complexity); that stretch reads FFSPSPGSSSLSSWS. 2 positions are modified to phosphoserine; by MAPK7 and MAPK14: S168 and S170. A phosphoserine; by MAPK8 and MAPK9 mark is found at S213 and S217. Residues 213 to 229 form an SP 1 repeat; that stretch reads SPLPSPRASPRPWTPED. The 2 approximate SP repeats stretch occupies residues 213 to 293; it reads SPLPSPRASP…LSRRGSLGEE (81 aa). 2 stretches are compositionally biased toward pro residues: residues 215 to 227 and 254 to 263; these read LPSPRASPRPWTP and GPTPASPRPA. The short motif at 268 to 270 is the Nuclear localization signal element; it reads KRR. Low complexity predominate over residues 272 to 288; that stretch reads SSSGTPSSASPALSRRG. The SP 2; approximate repeat unit spans residues 277–293; sequence PSSASPALSRRGSLGEE. Phosphoserine; by RPS6KA3 occurs at positions 289 and 344. The RHD domain occupies 401 to 582; the sequence is SALPPLDWPL…VPIECSQRSA (182 aa). Residues 430–437 mediate DNA binding; the sequence is RAHYETEG. Residues 586-683 form the IPT/TIG domain; sequence PQVEAYSPSA…KRSPTQSFRF (98 aa). The Nuclear localization signal motif lies at 672–674; the sequence is RRK. A Glycyl lysine isopeptide (Lys-Gly) (interchain with G-Cter in SUMO2) cross-link involves residue K689. Positions 791 to 870 are disordered; sequence PYGGRGSSFS…GGYSSGFRDS (80 aa). Over residues 805–824 the composition is skewed to pro residues; sequence FSPPAPFRPPPLPASPPLEG.

Member of the multicomponent NFATC transcription complex that consists of at least two components, a pre-existing cytoplasmic component NFATC2 and an inducible nuclear component NFATC1. Other NFAT proteins, such as NFATC3, or members of the activating protein-1 (AP-1) family and MAF can also bind the complex. NFAT proteins can bind DNA as monomers or dimers. Component of a promoter-binding complex composed of STAT3, NFATC3 and NFATC4; complex formation is enhanced by calcineurin. Interacts with CREBBP; this interaction potentiates transcription activation. Interacts with MAPK8/JNK1 and MAPK9/JNK2. Interacts with GATA4 (via the second Zn finger). Interacts (via N-terminus) with IRAK1 (via C-terminus). Interacts with RPS6KA3. Interacts with HOMER1, HOMER2 and HOMER3; this interaction competes with calcineurin/PPP3CA-binding and hence prevents NFATC4 dephosphorylation and activation. Interacts with ESR1 and ESR2; this interaction decreases NFATC4 transcriptional activity. Interacts with MTOR and MAPK7/ERK5. Interacts with TRIM17; this interaction prevents NFATC3 nuclear localization. Interacts with TCF25 (via C-terminus); the interaction leads to suppression of NFATC4 transcription factor activity and is reduced following stimulation with angiotensin-2. In terms of processing, phosphorylated by NFATC-kinases; dephosphorylated by calcineurin/PPP3CA. Phosphorylated on Ser-168 and Ser-170 by MTOR, IRAK1, MAPK7/ERK5 and MAPK14/p38, on Ser-213 and Ser-217 by MAPK8/JNK1 and MAPK9/JNK2, and on Ser-289 and Ser-344 by RPS6KA3. Phosphorylated by GSK3B. Phosphorylation by GSK3B markedly increases NFATC4 ubiquitination. Phosphorylation at Ser-168 and Ser-170 is stimulated by UV irradiation. Phosphorylation determines subcellular location: the hyperphosphorylated protein is cytosolic, while the dephosphorylated form is targeted to the nucleus. Ubiquitinated, leading to degradation by the proteasome. Ubiquitination may be stimulated by GSK3B-dependent phosphorylation. Polyubiquitin linkage mainly occurs through 'Lys-48'. As to expression, widely expressed, with high levels in placenta, lung, kidney, testis and ovary. Weakly expressed in spleen and thymus. In the hippocampus, expressed in the granular layer of the dentate gyrus, in the pyramidal neurons of CA3 region, and in the hippocampal fissure. Expressed in the heart (at protein level).

The protein resides in the cytoplasm. The protein localises to the nucleus. With respect to regulation, transcriptional activity may be repressed by ESR1 and ESR2. In terms of biological role, ca(2+)-regulated transcription factor that is involved in several processes, including the development and function of the immune, cardiovascular, musculoskeletal, and nervous systems. Involved in T-cell activation, stimulating the transcription of cytokine genes, including that of IL2 and IL4. Along with NFATC3, involved in embryonic heart development. Following JAK/STAT signaling activation and as part of a complex with NFATC3 and STAT3, binds to the alpha-beta E4 promoter region of CRYAB and activates transcription in cardiomyocytes. Involved in mitochondrial energy metabolism required for cardiac morphogenesis and function. Transactivates many genes involved in the cardiovascular system, including AGTR2, NPPB/BNP (in synergy with GATA4), NPPA/ANP/ANF and MYH7/beta-MHC. Involved in the regulation of adult hippocampal neurogenesis. Involved in BDNF-driven pro-survival signaling in hippocampal adult-born neurons. Involved in the formation of long-term spatial memory and long-term potentiation. In cochlear nucleus neurons, may play a role in deafferentation-induced apoptosis during the developmental critical period, when auditory neurons depend on afferent input for survival. Binds to and activates the BACE1/Beta-secretase 1 promoter, hence may regulate the proteolytic processing of the amyloid precursor protein (APP). Plays a role in adipocyte differentiation. May be involved in myoblast differentiation into myotubes. Binds the consensus DNA sequence 5'-GGAAAAT-3'. In the presence of CREBBP, activates TNF transcription. Binds to PPARG gene promoter and regulates its activity. Binds to PPARG and REG3G gene promoters. This is Nuclear factor of activated T-cells, cytoplasmic 4 (NFATC4) from Homo sapiens (Human).